The sequence spans 64 residues: MKLLVYPLFTNVINNCGLRLKKSTNRKPKIHICFLFAEAVPITSNFDFQECLFFDSYLDLVRSV.

It is found in the mitochondrion. This is an uncharacterized protein from Marchantia polymorpha (Common liverwort).